The primary structure comprises 149 residues: MRAVVQKVKKSSVKVDGKVVGQIGKGINALIGITEGDTLEDIEYLKNKILNLRIFEDEEGKLNKSLKDVNGELLVISQFTLYGDCRRGRRPSFIEALSGDKSEKIYNDFVDLCRKEVPNVQTGVFGAHMDVDIQNDGPVTLLIDSKKVF.

Residues 137 to 138 carry the Gly-cisPro motif, important for rejection of L-amino acids motif; it reads GP.

Belongs to the DTD family. As to quaternary structure, homodimer.

It localises to the cytoplasm. It catalyses the reaction glycyl-tRNA(Ala) + H2O = tRNA(Ala) + glycine + H(+). It carries out the reaction a D-aminoacyl-tRNA + H2O = a tRNA + a D-alpha-amino acid + H(+). Functionally, an aminoacyl-tRNA editing enzyme that deacylates mischarged D-aminoacyl-tRNAs. Also deacylates mischarged glycyl-tRNA(Ala), protecting cells against glycine mischarging by AlaRS. Acts via tRNA-based rather than protein-based catalysis; rejects L-amino acids rather than detecting D-amino acids in the active site. By recycling D-aminoacyl-tRNA to D-amino acids and free tRNA molecules, this enzyme counteracts the toxicity associated with the formation of D-aminoacyl-tRNA entities in vivo and helps enforce protein L-homochirality. In Clostridium acetobutylicum (strain ATCC 824 / DSM 792 / JCM 1419 / IAM 19013 / LMG 5710 / NBRC 13948 / NRRL B-527 / VKM B-1787 / 2291 / W), this protein is D-aminoacyl-tRNA deacylase.